Consider the following 70-residue polypeptide: Large ribosomal subunit protein bL31c (70 aa).

The protein belongs to the bacterial ribosomal protein bL31 family. Type A subfamily. In terms of assembly, part of the 50S ribosomal subunit.

The protein localises to the plastid. It localises to the chloroplast. Binds the 23S rRNA. This is Large ribosomal subunit protein bL31c from Emiliania huxleyi (Coccolithophore).